Consider the following 429-residue polypeptide: Chaperone SurA (429 aa).

The signal sequence occupies residues 1–18; sequence MFKRIALVCALFSGICFA. PpiC domains follow at residues 170 to 271 and 281 to 380; these read NLTY…KLVA and ITQT…EVIA.

The protein resides in the periplasm. It carries out the reaction [protein]-peptidylproline (omega=180) = [protein]-peptidylproline (omega=0). Its function is as follows. Chaperone involved in the correct folding and assembly of outer membrane proteins. Recognizes specific patterns of aromatic residues and the orientation of their side chains, which are found more frequently in integral outer membrane proteins. May act in both early periplasmic and late outer membrane-associated steps of protein maturation. This Legionella pneumophila (strain Paris) protein is Chaperone SurA.